A 294-amino-acid chain; its full sequence is Large ribosomal subunit protein uL4m (294 aa).

Residues 119–139 (EVSGGGRKPWQQKGSGRARHG) are disordered. Omega-N-methylarginine is present on R147.

The protein belongs to the universal ribosomal protein uL4 family. In terms of assembly, component of the mitochondrial ribosome large subunit (39S) which comprises a 16S rRNA and about 50 distinct proteins. Interacts with MIEF1 upstream open reading frame protein.

It is found in the mitochondrion. The protein is Large ribosomal subunit protein uL4m (Mrpl4) of Mus musculus (Mouse).